The sequence spans 578 residues: 15-cis-phytoene desaturase, chloroplastic/chromoplastic (578 aa).

The N-terminal 87 residues, 1 to 87 (MDTGCLSSMN…PLENTINFLE (87 aa)), are a transit peptide targeting the chloroplast and chromoplast. Residues Ala-115, 134–135 (EA), Lys-142, 159–160 (HI), and Tyr-165 contribute to the FAD site. Substrate is bound at residue Arg-300. Residues Ile-342 and Asp-531 each contribute to the FAD site. Ala-539 serves as a coordination point for substrate. Met-541 serves as a coordination point for FAD.

The protein belongs to the carotenoid/retinoid oxidoreductase family. In terms of assembly, homotetramer. Homotetramer is the active form of the enzyme. FAD serves as cofactor.

Its subcellular location is the plastid. The protein resides in the chloroplast. The protein localises to the chromoplast. It localises to the membrane. The enzyme catalyses 2 a plastoquinone + 15-cis-phytoene = 9,9',15-tri-cis-zeta-carotene + 2 a plastoquinol. It functions in the pathway carotenoid biosynthesis; lycopene biosynthesis. Inhibited by the herbicide norflurazon (NFZ). Functionally, converts phytoene into zeta-carotene via the intermediary of phytofluene by the symmetrical introduction of two double bonds at the C-11 and C-11' positions of phytoene with a concomitant isomerization of two neighboring double bonds at the C9 and C9' positions from trans to cis. Active with decylplastoquinone (DPQ) as substrate. Also active with other benzoquinones, which are strongly preferred over naphthoquinones as substrates. This chain is 15-cis-phytoene desaturase, chloroplastic/chromoplastic (PDS1), found in Oryza sativa subsp. indica (Rice).